The following is a 965-amino-acid chain: Aminopeptidase N (965 aa).

Over 2 to 8 the chain is Cytoplasmic; that stretch reads AKGFYIS. The chain crosses the membrane as a helical; Signal-anchor for type II membrane protein span at residues 9–32; that stretch reads KTLGILGILLGVAAVCTIIALSVV. Positions 33–68 are cytosolic Ser/Thr-rich junction; that stretch reads YAQEKNRNAENSAIAPTLPGSTSATTSTTNPAIDES. The Extracellular segment spans residues 33–965; the sequence is YAQEKNRNAE…VVLKWFTENS (933 aa). A disordered region spans residues 44–68; the sequence is SAIAPTLPGSTSATTSTTNPAIDES. The segment covering 47 to 64 has biased composition (low complexity); sequence APTLPGSTSATTSTTNPA. Positions 69–965 are metalloprotease; sequence KPWNQYRLPK…VVLKWFTENS (897 aa). 2 N-linked (GlcNAc...) asparagine glycosylation sites follow: N114 and N128. Y176 carries the sulfotyrosine modification. N-linked (GlcNAc...) asparagine glycosylation is found at N234, N242, and N264. 351–355 serves as a coordination point for substrate; sequence GAMEN. Residue H387 participates in Zn(2+) binding. The active-site Proton acceptor is the E388. Zn(2+) is bound by residues H391 and E410. N-linked (GlcNAc...) asparagine glycosylation is found at N555, N606, and N624. An intrachain disulfide couples C760 to C767. The N-linked (GlcNAc...) asparagine glycan is linked to N780. A disulfide bridge links C797 with C833. Y852 is subject to Phosphotyrosine.

Belongs to the peptidase M1 family. As to quaternary structure, homodimer. Interacts with SLC6A19. Zn(2+) serves as cofactor. In terms of processing, sulfated. N- and O-glycosylated. Post-translationally, may undergo proteolysis and give rise to a soluble form. In terms of tissue distribution, widely distributed throughout the CNS. Particularly abundant in kidney and intestinal microvilli, also detected in lung and liver. Weakly expressed in heart and aorta.

Its subcellular location is the cell membrane. The enzyme catalyses Release of an N-terminal amino acid, Xaa-|-Yaa- from a peptide, amide or arylamide. Xaa is preferably Ala, but may be most amino acids including Pro (slow action). When a terminal hydrophobic residue is followed by a prolyl residue, the two may be released as an intact Xaa-Pro dipeptide.. Functionally, broad specificity aminopeptidase which plays a role in the final digestion of peptides generated from hydrolysis of proteins by gastric and pancreatic proteases. Also involved in the processing of various peptides including peptide hormones, such as angiotensin III and IV, neuropeptides, and chemokines. May also be involved the cleavage of peptides bound to major histocompatibility complex class II molecules of antigen presenting cells. May have a role in angiogenesis and promote cholesterol crystallization. May have a role in amino acid transport by acting as binding partner of amino acid transporter SLC6A19 and regulating its activity. This Rattus norvegicus (Rat) protein is Aminopeptidase N (Anpep).